The chain runs to 394 residues: Phosphopentomutase (394 aa).

6 residues coordinate Mn(2+): aspartate 13, aspartate 286, histidine 291, aspartate 327, histidine 328, and histidine 339.

The protein belongs to the phosphopentomutase family. Requires Mn(2+) as cofactor.

The protein localises to the cytoplasm. The enzyme catalyses 2-deoxy-alpha-D-ribose 1-phosphate = 2-deoxy-D-ribose 5-phosphate. It catalyses the reaction alpha-D-ribose 1-phosphate = D-ribose 5-phosphate. The protein operates within carbohydrate degradation; 2-deoxy-D-ribose 1-phosphate degradation; D-glyceraldehyde 3-phosphate and acetaldehyde from 2-deoxy-alpha-D-ribose 1-phosphate: step 1/2. In terms of biological role, isomerase that catalyzes the conversion of deoxy-ribose 1-phosphate (dRib-1-P) and ribose 1-phosphate (Rib-1-P) to deoxy-ribose 5-phosphate (dRib-5-P) and ribose 5-phosphate (Rib-5-P), respectively. The chain is Phosphopentomutase from Bacillus anthracis (strain A0248).